A 476-amino-acid chain; its full sequence is Aspartyl/glutamyl-tRNA(Asn/Gln) amidotransferase subunit B (476 aa).

Belongs to the GatB/GatE family. GatB subfamily. In terms of assembly, heterotrimer of A, B and C subunits.

It catalyses the reaction L-glutamyl-tRNA(Gln) + L-glutamine + ATP + H2O = L-glutaminyl-tRNA(Gln) + L-glutamate + ADP + phosphate + H(+). It carries out the reaction L-aspartyl-tRNA(Asn) + L-glutamine + ATP + H2O = L-asparaginyl-tRNA(Asn) + L-glutamate + ADP + phosphate + 2 H(+). Functionally, allows the formation of correctly charged Asn-tRNA(Asn) or Gln-tRNA(Gln) through the transamidation of misacylated Asp-tRNA(Asn) or Glu-tRNA(Gln) in organisms which lack either or both of asparaginyl-tRNA or glutaminyl-tRNA synthetases. The reaction takes place in the presence of glutamine and ATP through an activated phospho-Asp-tRNA(Asn) or phospho-Glu-tRNA(Gln). The polypeptide is Aspartyl/glutamyl-tRNA(Asn/Gln) amidotransferase subunit B (Neisseria meningitidis serogroup B (strain ATCC BAA-335 / MC58)).